The chain runs to 441 residues: tRNA-2-methylthio-N(6)-dimethylallyladenosine synthase (441 aa).

Residues Lys3–Gln119 form the MTTase N-terminal domain. 6 residues coordinate [4Fe-4S] cluster: Cys12, Cys48, Cys82, Cys155, Cys159, and Cys162. The Radical SAM core domain occupies Arg141 to Glu371. The region spanning Gly374–Asp437 is the TRAM domain.

It belongs to the methylthiotransferase family. MiaB subfamily. As to quaternary structure, monomer. It depends on [4Fe-4S] cluster as a cofactor.

The protein resides in the cytoplasm. It catalyses the reaction N(6)-dimethylallyladenosine(37) in tRNA + (sulfur carrier)-SH + AH2 + 2 S-adenosyl-L-methionine = 2-methylsulfanyl-N(6)-dimethylallyladenosine(37) in tRNA + (sulfur carrier)-H + 5'-deoxyadenosine + L-methionine + A + S-adenosyl-L-homocysteine + 2 H(+). Functionally, catalyzes the methylthiolation of N6-(dimethylallyl)adenosine (i(6)A), leading to the formation of 2-methylthio-N6-(dimethylallyl)adenosine (ms(2)i(6)A) at position 37 in tRNAs that read codons beginning with uridine. The protein is tRNA-2-methylthio-N(6)-dimethylallyladenosine synthase of Prosthecochloris aestuarii (strain DSM 271 / SK 413).